We begin with the raw amino-acid sequence, 323 residues long: Cobalamin biosynthesis protein CobD (323 aa).

Helical transmembrane passes span 52 to 72 (IAGVLLLALTVTSAASVTWLM), 73 to 93 (VWGSARLHALAGLMVAALLSS), 154 to 174 (DGIIAPLFWLALGGPVAGMAF), 214 to 234 (ALLMVMVAPLIGLSQANAASI), and 294 to 314 (IRLMYATTLAMAVISLATAAL).

This sequence belongs to the CobD/CbiB family.

It is found in the cell membrane. It participates in cofactor biosynthesis; adenosylcobalamin biosynthesis. In terms of biological role, converts cobyric acid to cobinamide by the addition of aminopropanol on the F carboxylic group. The polypeptide is Cobalamin biosynthesis protein CobD (Pelobacter propionicus (strain DSM 2379 / NBRC 103807 / OttBd1)).